The sequence spans 119 residues: C-C motif chemokine 24 (119 aa).

A signal peptide spans 1-26 (MAGLATFVVSLLLVTLCAHCIDPAGS). 2 disulfides stabilise this stretch: Cys33–Cys58 and Cys34–Cys74. Residues Asn54 and Asn115 are each glycosylated (N-linked (GlcNAc...) asparagine).

It belongs to the intercrine beta (chemokine CC) family.

The protein localises to the secreted. In terms of biological role, chemotactic for resting T-lymphocytes, and eosinophils. Has lower chemotactic activity for neutrophils but none for monocytes and activated lymphocytes. Is a strong suppressor of colony formation by a multipotential hematopoietic progenitor cell line. Binds to CCR3. The polypeptide is C-C motif chemokine 24 (Canis lupus familiaris (Dog)).